The chain runs to 314 residues: tRNA dimethylallyltransferase (314 aa).

15–22 (GPTATGKS) serves as a coordination point for ATP. 17–22 (TATGKS) lines the substrate pocket. The tract at residues 40-43 (DSML) is interaction with substrate tRNA.

It belongs to the IPP transferase family. As to quaternary structure, monomer. Mg(2+) is required as a cofactor.

The enzyme catalyses adenosine(37) in tRNA + dimethylallyl diphosphate = N(6)-dimethylallyladenosine(37) in tRNA + diphosphate. Its function is as follows. Catalyzes the transfer of a dimethylallyl group onto the adenine at position 37 in tRNAs that read codons beginning with uridine, leading to the formation of N6-(dimethylallyl)adenosine (i(6)A). The chain is tRNA dimethylallyltransferase from Pelotomaculum thermopropionicum (strain DSM 13744 / JCM 10971 / SI).